The chain runs to 286 residues: Polyamine aminopropyltransferase (286 aa).

The PABS domain maps to 5-238 (TMWHETLHDQ…GIMTFAWATN (234 aa)). Q33 is an S-methyl-5'-thioadenosine binding site. Positions 64 and 88 each coordinate spermidine. S-methyl-5'-thioadenosine contacts are provided by residues E108 and 140-141 (DG). Residue D158 is the Proton acceptor of the active site. 158–161 (DCTD) is a binding site for spermidine. Residue P165 coordinates S-methyl-5'-thioadenosine.

It belongs to the spermidine/spermine synthase family. In terms of assembly, homodimer or homotetramer.

It localises to the cytoplasm. The enzyme catalyses S-adenosyl 3-(methylsulfanyl)propylamine + putrescine = S-methyl-5'-thioadenosine + spermidine + H(+). Its pathway is amine and polyamine biosynthesis; spermidine biosynthesis; spermidine from putrescine: step 1/1. Catalyzes the irreversible transfer of a propylamine group from the amino donor S-adenosylmethioninamine (decarboxy-AdoMet) to putrescine (1,4-diaminobutane) to yield spermidine. This is Polyamine aminopropyltransferase from Salmonella paratyphi B (strain ATCC BAA-1250 / SPB7).